Reading from the N-terminus, the 645-residue chain is Fructose-1,6-bisphosphatase class 3 (645 aa).

The protein belongs to the FBPase class 3 family. Mn(2+) is required as a cofactor.

It carries out the reaction beta-D-fructose 1,6-bisphosphate + H2O = beta-D-fructose 6-phosphate + phosphate. It participates in carbohydrate biosynthesis; gluconeogenesis. This chain is Fructose-1,6-bisphosphatase class 3, found in Fusobacterium nucleatum subsp. nucleatum (strain ATCC 25586 / DSM 15643 / BCRC 10681 / CIP 101130 / JCM 8532 / KCTC 2640 / LMG 13131 / VPI 4355).